The chain runs to 65 residues: VCERHVGRKSTNNLNLTCQWNSCRTTTVKRDHITSHIRVHVPLKPHKCEFCGKSFKRPQDLKKHV.

A C2H2-type 1 zinc finger spans residues 16-40; sequence LTCQWNSCRTTTVKRDHITSHIRVH. The C2H2-type 2; degenerate zinc-finger motif lies at 46-65; it reads HKCEFCGKSFKRPQDLKKHV.

The protein belongs to the pacC/RIM101 family.

The protein localises to the nucleus. Transcription factor that mediates regulation of both acid- and alkaline-expressed genes in response to ambient pH. At alkaline ambient pH, activates transcription of alkaline-expressed genes (including pac1 itself) and represses transcription of acid-expressed genes. The sequence is that of pH-response transcription factor pacC/RIM101 (pac1) from Colletotrichum gloeosporioides (Anthracnose fungus).